The sequence spans 245 residues: Caffeoyl-CoA O-methyltransferase (245 aa).

Position 19 (Lys19) interacts with substrate. Residues Thr61, Glu83, 85–86 (GV), Ser91, Asp109, and Ala138 contribute to the S-adenosyl-L-methionine site. Asp161 is a binding site for substrate. Asp161 contributes to the a divalent metal cation binding site. Residue Asp163 participates in S-adenosyl-L-methionine binding. A divalent metal cation-binding residues include Asp187 and Asn188. Asn192 serves as a coordination point for substrate.

This sequence belongs to the class I-like SAM-binding methyltransferase superfamily. Cation-dependent O-methyltransferase family. CCoAMT subfamily. The cofactor is a divalent metal cation.

It carries out the reaction (E)-caffeoyl-CoA + S-adenosyl-L-methionine = (E)-feruloyl-CoA + S-adenosyl-L-homocysteine + H(+). Its pathway is aromatic compound metabolism; phenylpropanoid biosynthesis. Functionally, methylates caffeoyl-CoA to feruloyl-CoA and 5-hydroxyferuloyl-CoA to sinapoyl-CoA. Plays a role in the synthesis of feruloylated polysaccharides. Involved in the reinforcement of the plant cell wall. Also involved in the responding to wounding or pathogen challenge by the increased formation of cell wall-bound ferulic acid polymers. The sequence is that of Caffeoyl-CoA O-methyltransferase (CCOAOMT) from Zinnia elegans (Garden zinnia).